Consider the following 54-residue polypeptide: UPF0434 protein BCI_0256 (54 aa).

The protein belongs to the UPF0434 family.

This Baumannia cicadellinicola subsp. Homalodisca coagulata protein is UPF0434 protein BCI_0256.